A 98-amino-acid polypeptide reads, in one-letter code: NADH-ubiquinone oxidoreductase chain 4L (98 aa).

The next 3 helical transmembrane spans lie at 1-21 (MIPT…GMLT), 29-49 (SLLC…LIAL), and 61-81 (IILL…LVSI).

Belongs to the complex I subunit 4L family. Core subunit of respiratory chain NADH dehydrogenase (Complex I) which is composed of 45 different subunits.

It is found in the mitochondrion inner membrane. It catalyses the reaction a ubiquinone + NADH + 5 H(+)(in) = a ubiquinol + NAD(+) + 4 H(+)(out). Its function is as follows. Core subunit of the mitochondrial membrane respiratory chain NADH dehydrogenase (Complex I) which catalyzes electron transfer from NADH through the respiratory chain, using ubiquinone as an electron acceptor. Part of the enzyme membrane arm which is embedded in the lipid bilayer and involved in proton translocation. The protein is NADH-ubiquinone oxidoreductase chain 4L (MT-ND4L) of Macaca ochreata subsp. brunnescens (Muna-buton macaque).